The sequence spans 309 residues: Small ribosomal subunit protein mS23 (309 aa).

It belongs to the mitochondrion-specific ribosomal protein mS23 family. As to quaternary structure, component of the mitochondrial small ribosomal subunit.

It is found in the mitochondrion. This Lodderomyces elongisporus (strain ATCC 11503 / CBS 2605 / JCM 1781 / NBRC 1676 / NRRL YB-4239) (Yeast) protein is Small ribosomal subunit protein mS23 (RSM25).